The primary structure comprises 435 residues: N-lysine methyltransferase SMYD2-A (435 aa).

The region spanning 7–241 (EGTERFLSPG…PEEEIFNSYI (235 aa)) is the SET domain. 17-19 (KGR) is a binding site for S-adenosyl-L-methionine. 8 residues coordinate Zn(2+): C52, C55, C65, C68, C74, C78, H86, and C90. The MYND-type zinc-finger motif lies at 52–90 (CECCFTRKEGLSKCGKCKQAYYCNVECQRGDWPMHKLEC). Residues H137, 206-207 (NH), and 258-260 (YFF) each bind S-adenosyl-L-methionine.

The protein belongs to the class V-like SAM-binding methyltransferase superfamily.

Its subcellular location is the cytoplasm. It is found in the cytosol. The protein localises to the nucleus. It catalyses the reaction L-lysyl(4)-[histone H3] + 3 S-adenosyl-L-methionine = N(6),N(6),N(6)-trimethyl-L-lysyl(4)-[histone H3] + 3 S-adenosyl-L-homocysteine + 3 H(+). The enzyme catalyses L-lysyl-[protein] + S-adenosyl-L-methionine = N(6)-methyl-L-lysyl-[protein] + S-adenosyl-L-homocysteine + H(+). In terms of biological role, protein-lysine N-methyltransferase that methylates both histones and non-histone proteins, including p53/TP53 and RB1. Specifically trimethylates histone H3 'Lys-4' (H3K4me3) in vivo. The activity requires interaction with HSP90alpha. Shows even higher methyltransferase activity on p53/TP53. Monomethylates 'Lys-370' of p53/TP53, leading to decreased DNA-binding activity and subsequent transcriptional regulation activity of p53/TP53. Monomethylates RB1 at 'Lys-860'. This is N-lysine methyltransferase SMYD2-A (smyd2a) from Danio rerio (Zebrafish).